The primary structure comprises 308 residues: Methionine synthase (308 aa).

Residues H192, C194, E215, and C282 each contribute to the Zn(2+) site.

It belongs to the archaeal MetE family. Zn(2+) serves as cofactor.

Its pathway is amino-acid biosynthesis; L-methionine biosynthesis via de novo pathway. In terms of biological role, catalyzes the transfer of a methyl group to L-homocysteine resulting in methionine formation. Can use methylcobalamin and methylcobinamide as methyl donors, but methylcobalamin is not considered to be the physiological substrate. This chain is Methionine synthase, found in Methanocaldococcus jannaschii (strain ATCC 43067 / DSM 2661 / JAL-1 / JCM 10045 / NBRC 100440) (Methanococcus jannaschii).